The following is a 417-amino-acid chain: RH-like protein IA (417 aa).

11 helical membrane-spanning segments follow: residues 12 to 32 (CLPLCALTLEAALILLFYFFT), 44 to 64 (LVASYQVGQDLTVMAAIGFGF), 77 to 97 (VAFSLFMLALGVQWAILLDGF), 125 to 145 (ISVDAVLGKVNLVQLVVMVLV), 172 to 192 (IYVFAAYFGLSVAWCLPKPLP), 203 to 223 (TIPSLSAMLGALFLWMFWPSF), 238 to 258 (VFNTYYAVAVSVVTAISGSSL), 265 to 285 (ISMSYMHNAVLAGGVAVGTSC), 287 to 307 (LITSPWLAMVLGLVAGLISIG), 331 to 351 (NFSLLGLLGEIIYIVLLVHHT), and 358 to 378 (MIGFQVLLRIGEFSLATTIAL).

The protein belongs to the ammonium transporter (TC 2.A.49) family. Rh subfamily.

It is found in the membrane. Functionally, may be part of an oligomeric complex which is likely to have a transport or channel function in the erythrocyte membrane. The chain is RH-like protein IA from Pan troglodytes (Chimpanzee).